The following is a 132-amino-acid chain: MAAGGELSYEELLDHILNNKPIPNIVEVPNVTLDEGLASTPSLRPRPRPWEGQLQHQSHQGSLDKPNISLDIDQESLEGMTSLTRLSECYDIQSKLQINDSDNDNDDNNNDNNKGDGNDDDNNTVTANPTAR.

Disordered stretches follow at residues 36-69 (GLASTPSLRPRPRPWEGQLQHQSHQGSLDKPNIS) and 97-132 (QINDSDNDNDDNNNDNNKGDGNDDDNNTVTANPTAR). Residue S101 is modified to Phosphoserine.

As to quaternary structure, copurifies with proteins HOL1, MMP1, PEX7 and PLB1.

This is an uncharacterized protein from Saccharomyces cerevisiae (strain ATCC 204508 / S288c) (Baker's yeast).